The chain runs to 469 residues: tRNA(Ile)-lysidine synthase (469 aa).

An ATP-binding site is contributed by 26–31; the sequence is SGGPDS.

Belongs to the tRNA(Ile)-lysidine synthase family.

The protein resides in the cytoplasm. The catalysed reaction is cytidine(34) in tRNA(Ile2) + L-lysine + ATP = lysidine(34) in tRNA(Ile2) + AMP + diphosphate + H(+). Functionally, ligates lysine onto the cytidine present at position 34 of the AUA codon-specific tRNA(Ile) that contains the anticodon CAU, in an ATP-dependent manner. Cytidine is converted to lysidine, thus changing the amino acid specificity of the tRNA from methionine to isoleucine. This is tRNA(Ile)-lysidine synthase from Clostridium perfringens (strain ATCC 13124 / DSM 756 / JCM 1290 / NCIMB 6125 / NCTC 8237 / Type A).